A 127-amino-acid polypeptide reads, in one-letter code: Anti-adapter protein IraD (127 aa).

Belongs to the GpW/Gp25 family. IraD subfamily. In terms of assembly, interacts with RssB.

The protein resides in the cytoplasm. Inhibits RpoS proteolysis by regulating RssB activity, thereby increasing the stability of the sigma stress factor RpoS during oxidative stress. Its effect on RpoS stability is due to its interaction with RssB, which probably blocks the interaction of RssB with RpoS, and the consequent delivery of the RssB-RpoS complex to the ClpXP protein degradation pathway. In Escherichia coli O6:H1 (strain CFT073 / ATCC 700928 / UPEC), this protein is Anti-adapter protein IraD.